The following is a 118-amino-acid chain: Ribulose bisphosphate carboxylase small subunit 2 (118 aa).

Belongs to the RuBisCO small chain family. In terms of assembly, heterohexadecamer of 8 large and 8 small subunits.

In terms of biological role, ruBisCO catalyzes two reactions: the carboxylation of D-ribulose 1,5-bisphosphate, the primary event in carbon dioxide fixation, as well as the oxidative fragmentation of the pentose substrate. Both reactions occur simultaneously and in competition at the same active site. Although the small subunit is not catalytic it is essential for maximal activity. This Acidithiobacillus ferrooxidans (Thiobacillus ferrooxidans) protein is Ribulose bisphosphate carboxylase small subunit 2.